Reading from the N-terminus, the 207-residue chain is Octanoyltransferase (207 aa).

The BPL/LPL catalytic domain occupies 29-204; sequence DDTADELWLV…ELMVQLGDEE (176 aa). Substrate contacts are provided by residues 68-75, 135-137, and 148-150; these read RGGQVTYH, SLG, and GVA. Cys-166 acts as the Acyl-thioester intermediate in catalysis.

It belongs to the LipB family.

The protein localises to the cytoplasm. It carries out the reaction octanoyl-[ACP] + L-lysyl-[protein] = N(6)-octanoyl-L-lysyl-[protein] + holo-[ACP] + H(+). The protein operates within protein modification; protein lipoylation via endogenous pathway; protein N(6)-(lipoyl)lysine from octanoyl-[acyl-carrier-protein]: step 1/2. Its function is as follows. Catalyzes the transfer of endogenously produced octanoic acid from octanoyl-acyl-carrier-protein onto the lipoyl domains of lipoate-dependent enzymes. Lipoyl-ACP can also act as a substrate although octanoyl-ACP is likely to be the physiological substrate. The protein is Octanoyltransferase of Methylococcus capsulatus (strain ATCC 33009 / NCIMB 11132 / Bath).